The following is a 149-amino-acid chain: Cytochrome c-555 (149 aa).

The N-terminal stretch at 1-20 (MKRTMIVVTTLLLGAGAVMA) is a signal peptide. The heme c site is built by Met-32, Cys-137, Cys-140, and His-141.

As to quaternary structure, monomer. In terms of processing, binds 1 heme c group covalently per subunit.

The protein localises to the periplasm. Its function is as follows. Low-spin monoheme cytochrome. The chain is Cytochrome c-555 (cycC) from Bradyrhizobium diazoefficiens (strain JCM 10833 / BCRC 13528 / IAM 13628 / NBRC 14792 / USDA 110).